Here is a 613-residue protein sequence, read N- to C-terminus: Transcription factor Sp2 (613 aa).

Residues 1–32 are disordered; it reads MSDPQTSMAATAAVSPSDYLQPAASTTQDSQP. The span at 23-32 shows a compositional bias: polar residues; it reads AASTTQDSQP. Ser-78 carries the post-translational modification Phosphoserine. 2 disordered regions span residues 170-197 and 225-255; these read SPSSHKPVPIKPAPVQKSSTTTTPAQSG and PGAATQLLTESPPAPLSKTNKKARKKSLPAA. A compositionally biased stretch (polar residues) spans 185–197; it reads QKSSTTTTPAQSG. A 9aaTAD; inactive motif is present at residues 361 to 369; it reads GEVQTVLVQ. Positions 374 to 392 are enriched in low complexity; the sequence is ATAATASTTTCSSPASRAA. Residues 374 to 402 are disordered; sequence ATAATASTTTCSSPASRAAHLSGTSKKHS. 3 consecutive C2H2-type zinc fingers follow at residues 525-549, 555-579, and 585-607; these read HVCHIPDCGKTFRKTSLLRAHVRLH, FVCNWFFCGKRFTRSDELQRHARTH, and FECAQCQKRFMRSDHLTKHYKTH.

Belongs to the Sp1 C2H2-type zinc-finger protein family.

The protein resides in the nucleus. Its function is as follows. Binds to GC box promoters elements and selectively activates mRNA synthesis from genes that contain functional recognition sites. This chain is Transcription factor Sp2 (SP2), found in Bos taurus (Bovine).